The primary structure comprises 344 residues: Transcription factor HRS1 (344 aa).

Residues 88–184 (IKDSSTSNEE…DGGGGRKQRR (97 aa)) are disordered. Over residues 95-104 (NEEEDEEFDD) the composition is skewed to acidic residues. Basic and acidic residues-rich tracts occupy residues 105–124 (EHGN…KSDW) and 138–178 (LLPK…DGGG). Residues 178 to 238 (GGRKQRRCWS…HLQKYRLHTR (61 aa)) form the HTH myb-type domain. The segment at residues 209–234 (PKQIREFMKVDGLTNDEVKSHLQKYR) is a DNA-binding region (H-T-H motif). Over residues 269–291 (STGKTTGGATTSSTTTTTGIYGT) the composition is skewed to low complexity. The interval 269–322 (STGKTTGGATTSSTTTTTGIYGTMAAPPPPQWPSHSNYRPSIIVDEGSGSHSEG) is disordered.

In terms of tissue distribution, expressed in the root hair region and root hair cells.

Its subcellular location is the nucleus. In terms of biological role, transcription factor involved in nitrate and phosphate signaling in roots. Integrates nitrate and phosphate starvation responses and adaptation of root architecture depending on nutrient availabilities. Acts downstream of the nitrate sensor and transporter NPF6.3/NRT1.1. Represses primary root development in response to phosphate deficiency conditions, only when nitrate is present. Involved in the modulation of primary root and root hair growth in phosphate-deprived environment. May be required for suppressing abscisic acid (ABA) signaling in germinating embryo axis, which promotes the timely germination of seeds. This Arabidopsis thaliana (Mouse-ear cress) protein is Transcription factor HRS1.